Consider the following 696-residue polypeptide: Transcriptional regulatory protein pro1 (696 aa).

The interval 1–48 is disordered; it reads MSTQSPNHHEDITKTSSVNMTTTTTTTKTKAAAKAGTNAAPKQKTQMH. Low complexity predominate over residues 21–40; it reads TTTTTTTKTKAAAKAGTNAA. The zn(2)-C6 fungal-type DNA-binding region spans 55–82; that stretch reads CYTCRLRRKKCDEGSPMCTACKHLGLCC. The tract at residues 112–145 is disordered; sequence LSEKSSHTIQTSINTPPGLSHSLPTSATFSDPLD. A compositionally biased stretch (polar residues) spans 118–140; it reads HTIQTSINTPPGLSHSLPTSATF.

The protein localises to the nucleus. May be involved in fruiting body development. The chain is Transcriptional regulatory protein pro1 (adv-1) from Neurospora crassa (strain ATCC 24698 / 74-OR23-1A / CBS 708.71 / DSM 1257 / FGSC 987).